We begin with the raw amino-acid sequence, 201 residues long: Large ribosomal subunit protein uL4 (201 aa).

The segment at 45 to 72 (AQKTRAEVTGSGKKPWRQKGTGRARAGS) is disordered.

The protein belongs to the universal ribosomal protein uL4 family. In terms of assembly, part of the 50S ribosomal subunit.

Functionally, one of the primary rRNA binding proteins, this protein initially binds near the 5'-end of the 23S rRNA. It is important during the early stages of 50S assembly. It makes multiple contacts with different domains of the 23S rRNA in the assembled 50S subunit and ribosome. Forms part of the polypeptide exit tunnel. The sequence is that of Large ribosomal subunit protein uL4 from Shewanella baltica (strain OS223).